Reading from the N-terminus, the 411-residue chain is S-inosyl-L-homocysteine hydrolase (411 aa).

Positions 121 and 146 each coordinate substrate. NAD(+) is bound at residue Thr147–Thr149. Lys176 and Asp180 together coordinate substrate. Residues Asn181, Gly210–Gly215, Glu233, Asn268, Ser289–His291, and Asn335 each bind NAD(+).

This sequence belongs to the adenosylhomocysteinase family. It depends on NAD(+) as a cofactor.

It is found in the cytoplasm. It catalyses the reaction S-inosyl-L-homocysteine + H2O = L-homocysteine + inosine. Its pathway is amino-acid biosynthesis; S-adenosyl-L-methionine biosynthesis. In terms of biological role, catalyzes the hydrolysis of S-inosyl-L-homocysteine (SIH) to L-homocysteine (Hcy) and inosine. Likely functions in a S-adenosyl-L-methionine (SAM) recycling pathway from S-adenosyl-L-homocysteine (SAH) produced from SAM-dependent methylation reactions. Can also catalyze the reverse reaction in vitro, i.e. the synthesis of SIH from Hcy and inosine. In Methanosarcina acetivorans (strain ATCC 35395 / DSM 2834 / JCM 12185 / C2A), this protein is S-inosyl-L-homocysteine hydrolase.